We begin with the raw amino-acid sequence, 213 residues long: Large ribosomal subunit protein uL4 (213 aa).

The tract at residues 41–75 (GTASTKTRAEVSRSGKKMYSQKGTGNARHGDRSVP) is disordered.

Belongs to the universal ribosomal protein uL4 family. In terms of assembly, part of the 50S ribosomal subunit.

In terms of biological role, one of the primary rRNA binding proteins, this protein initially binds near the 5'-end of the 23S rRNA. It is important during the early stages of 50S assembly. It makes multiple contacts with different domains of the 23S rRNA in the assembled 50S subunit and ribosome. Forms part of the polypeptide exit tunnel. The chain is Large ribosomal subunit protein uL4 from Deinococcus geothermalis (strain DSM 11300 / CIP 105573 / AG-3a).